Consider the following 290-residue polypeptide: Glutamate 5-kinase (290 aa).

Lys-21 serves as a coordination point for ATP. Residues Ser-60, Asp-151, and Asn-163 each contribute to the substrate site. ATP is bound at residue 217 to 223; that stretch reads TGGMFTK.

This sequence belongs to the glutamate 5-kinase family.

It is found in the cytoplasm. The catalysed reaction is L-glutamate + ATP = L-glutamyl 5-phosphate + ADP. The protein operates within amino-acid biosynthesis; L-proline biosynthesis; L-glutamate 5-semialdehyde from L-glutamate: step 1/2. Functionally, catalyzes the transfer of a phosphate group to glutamate to form L-glutamate 5-phosphate. This is Glutamate 5-kinase from Leptospira interrogans serogroup Icterohaemorrhagiae serovar copenhageni (strain Fiocruz L1-130).